A 1239-amino-acid polypeptide reads, in one-letter code: DNA topoisomerase 2 (1239 aa).

ATP contacts are provided by residues Asn65, Asn96, 124–126, 137–144, and 354–356; these read SSN, GRHGYGAK, and QSK. Positions 434–548 constitute a Toprim domain; sequence RTLIVTEGDS…SLLQHNPGYI (115 aa). Mg(2+) is bound by residues Glu440, Asp517, and Asp519. Positions 685 to 1101 constitute a Topo IIA-type catalytic domain; the sequence is IPHCVDGLKP…TPVKMWLTDL (417 aa). Tyr775 acts as the O-(5'-phospho-DNA)-tyrosine intermediate in catalysis. The segment at 956–965 is interaction with DNA; sequence ALSQRIYING. The disordered stretch occupies residues 1167 to 1206; it reads PASKRKPEDTYGGALSSGGSTRNVGKRLTGARGAKKKKVV.

This sequence belongs to the type II topoisomerase family. In terms of assembly, homodimer. It depends on Mg(2+) as a cofactor. The cofactor is Mn(2+). Ca(2+) serves as cofactor.

Its subcellular location is the nucleus. The protein localises to the mitochondrion matrix. The protein resides in the kinetoplast. It carries out the reaction ATP-dependent breakage, passage and rejoining of double-stranded DNA.. Its function is as follows. Control of topological states of DNA by transient breakage and subsequent rejoining of DNA strands. Topoisomerase II makes double-strand breaks. The sequence is that of DNA topoisomerase 2 (TOP2) from Crithidia fasciculata.